We begin with the raw amino-acid sequence, 372 residues long: DNA replication and repair protein RecF (372 aa).

Position 30 to 37 (30 to 37 (GENGQGKT)) interacts with ATP.

This sequence belongs to the RecF family.

It localises to the cytoplasm. In terms of biological role, the RecF protein is involved in DNA metabolism; it is required for DNA replication and normal SOS inducibility. RecF binds preferentially to single-stranded, linear DNA. It also seems to bind ATP. This chain is DNA replication and repair protein RecF, found in Anaeromyxobacter dehalogenans (strain 2CP-1 / ATCC BAA-258).